The primary structure comprises 321 residues: Glucokinase (321 aa).

Position 8–13 (8–13) interacts with ATP; the sequence is GDVGGT.

This sequence belongs to the bacterial glucokinase family.

The protein resides in the cytoplasm. The enzyme catalyses D-glucose + ATP = D-glucose 6-phosphate + ADP + H(+). The sequence is that of Glucokinase from Shigella dysenteriae serotype 1 (strain Sd197).